A 717-amino-acid chain; its full sequence is Polyribonucleotide nucleotidyltransferase (717 aa).

Asp495 and Asp501 together coordinate Mg(2+). In terms of domain architecture, KH spans 562 to 624 (PRMIMIQIPK…TALDSALSQI (63 aa)). One can recognise an S1 motif domain in the interval 634–703 (GEVYEGKVKS…KTGKYRLSRK (70 aa)).

This sequence belongs to the polyribonucleotide nucleotidyltransferase family. Mg(2+) serves as cofactor.

Its subcellular location is the cytoplasm. It catalyses the reaction RNA(n+1) + phosphate = RNA(n) + a ribonucleoside 5'-diphosphate. Involved in mRNA degradation. Catalyzes the phosphorolysis of single-stranded polyribonucleotides processively in the 3'- to 5'-direction. This is Polyribonucleotide nucleotidyltransferase from Cytophaga hutchinsonii (strain ATCC 33406 / DSM 1761 / CIP 103989 / NBRC 15051 / NCIMB 9469 / D465).